Here is a 68-residue protein sequence, read N- to C-terminus: DNA-directed RNA polymerase subunit omega (68 aa).

Belongs to the RNA polymerase subunit omega family. As to quaternary structure, the RNAP catalytic core consists of 2 alpha, 1 beta, 1 beta' and 1 omega subunit. When a sigma factor is associated with the core the holoenzyme is formed, which can initiate transcription.

It carries out the reaction RNA(n) + a ribonucleoside 5'-triphosphate = RNA(n+1) + diphosphate. Its function is as follows. Promotes RNA polymerase assembly. Latches the N- and C-terminal regions of the beta' subunit thereby facilitating its interaction with the beta and alpha subunits. The polypeptide is DNA-directed RNA polymerase subunit omega (Chromobacterium violaceum (strain ATCC 12472 / DSM 30191 / JCM 1249 / CCUG 213 / NBRC 12614 / NCIMB 9131 / NCTC 9757 / MK)).